The chain runs to 125 residues: Phosphoribosyl-AMP cyclohydrolase (125 aa).

Residue aspartate 80 participates in Mg(2+) binding. Residue cysteine 81 coordinates Zn(2+). The Mg(2+) site is built by aspartate 82 and aspartate 84. The Zn(2+) site is built by cysteine 97 and cysteine 104.

It belongs to the PRA-CH family. Homodimer. Mg(2+) is required as a cofactor. It depends on Zn(2+) as a cofactor.

It is found in the cytoplasm. The enzyme catalyses 1-(5-phospho-beta-D-ribosyl)-5'-AMP + H2O = 1-(5-phospho-beta-D-ribosyl)-5-[(5-phospho-beta-D-ribosylamino)methylideneamino]imidazole-4-carboxamide. It functions in the pathway amino-acid biosynthesis; L-histidine biosynthesis; L-histidine from 5-phospho-alpha-D-ribose 1-diphosphate: step 3/9. Functionally, catalyzes the hydrolysis of the adenine ring of phosphoribosyl-AMP. This is Phosphoribosyl-AMP cyclohydrolase from Leifsonia xyli subsp. xyli (strain CTCB07).